The following is a 49-amino-acid chain: MISSIHLRKLLGLLPEAYLPFDPIIDVLPIIPVLFLLLAFVWQAAVKFR.

A propeptide spanning residues 1–12 (MISSIHLRKLLG) is cleaved from the precursor. A helical membrane pass occupies residues 24–44 (IIDVLPIIPVLFLLLAFVWQA).

The protein belongs to the PsbK family. As to quaternary structure, PSII is composed of 1 copy each of membrane proteins PsbA, PsbB, PsbC, PsbD, PsbE, PsbF, PsbH, PsbI, PsbJ, PsbK, PsbL, PsbM, PsbT, PsbX, PsbY, PsbZ, Psb30/Ycf12, at least 3 peripheral proteins of the oxygen-evolving complex and a large number of cofactors. It forms dimeric complexes.

The protein localises to the plastid. It is found in the chloroplast thylakoid membrane. One of the components of the core complex of photosystem II (PSII). PSII is a light-driven water:plastoquinone oxidoreductase that uses light energy to abstract electrons from H(2)O, generating O(2) and a proton gradient subsequently used for ATP formation. It consists of a core antenna complex that captures photons, and an electron transfer chain that converts photonic excitation into a charge separation. The protein is Photosystem II reaction center protein K of Phacus acuminatus.